A 124-amino-acid polypeptide reads, in one-letter code: Fluoride-specific ion channel FluC (124 aa).

4 consecutive transmembrane segments (helical) span residues 1–21, 38–58, 69–89, and 99–119; these read MVPL…LRFA, TLAV…LFLI, GLMV…LDTV, and LALG…WAGL. Na(+) is bound by residues Gly76 and Thr79.

This sequence belongs to the fluoride channel Fluc/FEX (TC 1.A.43) family.

Its subcellular location is the cell inner membrane. The catalysed reaction is fluoride(in) = fluoride(out). With respect to regulation, na(+) is not transported, but it plays an essential structural role and its presence is essential for fluoride channel function. Its function is as follows. Fluoride-specific ion channel. Important for reducing fluoride concentration in the cell, thus reducing its toxicity. The polypeptide is Fluoride-specific ion channel FluC (Pseudomonas fluorescens (strain Pf0-1)).